The following is an 856-amino-acid chain: DNA mismatch repair protein MutS (856 aa).

Position 618–625 (618–625) interacts with ATP; sequence GPNMGGKS.

The protein belongs to the DNA mismatch repair MutS family.

In terms of biological role, this protein is involved in the repair of mismatches in DNA. It is possible that it carries out the mismatch recognition step. This protein has a weak ATPase activity. The chain is DNA mismatch repair protein MutS from Shewanella baltica (strain OS155 / ATCC BAA-1091).